A 61-amino-acid chain; its full sequence is Conotoxin TxMRCL-04 (61 aa).

Positions 1–22 are cleaved as a signal peptide; it reads MRCLPVFVILLLLIASTPSVDA. A propeptide spanning residues 23-46 is cleaved from the precursor; that stretch reads QLKTKDDMSLASFHDNVKRILQIR.

It belongs to the conotoxin T superfamily. Contains 2 disulfide bonds that can be either 'C1-C3, C2-C4' or 'C1-C4, C2-C3', since these disulfide connectivities have been observed for conotoxins with cysteine framework V (for examples, see AC P0DQQ7 and AC P81755). As to expression, expressed by the venom duct.

It localises to the secreted. The chain is Conotoxin TxMRCL-04 from Conus textile (Cloth-of-gold cone).